A 179-amino-acid polypeptide reads, in one-letter code: Large ribosomal subunit protein uL5 (179 aa).

The protein belongs to the universal ribosomal protein uL5 family. Part of the 50S ribosomal subunit; part of the 5S rRNA/L5/L18/L25 subcomplex. Contacts the 5S rRNA and the P site tRNA. Forms a bridge to the 30S subunit in the 70S ribosome.

This is one of the proteins that bind and probably mediate the attachment of the 5S RNA into the large ribosomal subunit, where it forms part of the central protuberance. In the 70S ribosome it contacts protein S13 of the 30S subunit (bridge B1b), connecting the 2 subunits; this bridge is implicated in subunit movement. Contacts the P site tRNA; the 5S rRNA and some of its associated proteins might help stabilize positioning of ribosome-bound tRNAs. The chain is Large ribosomal subunit protein uL5 from Geobacter sulfurreducens (strain ATCC 51573 / DSM 12127 / PCA).